Consider the following 907-residue polypeptide: Epidermal growth factor receptor substrate 15-like 1 (907 aa).

N-acetylalanine is present on Ala2. The EH 1 domain maps to 15–104 (GNPLYESYYK…SLTMPPPKFH (90 aa)). An interaction with DAB2 region spans residues 15-368 (GNPLYESYYK…PSERGTPIPD (354 aa)). One can recognise an EF-hand 1 domain in the interval 48 to 83 (LSDIILGKIWDLADPEGKGFLDKQGFYVALRLVACA). Tyr74 is modified (phosphotyrosine). 2 positions are modified to phosphoserine: Ser107 and Ser108. The EH 2 domain occupies 127 to 215 (EKAKFDGIFE…PPLIPPSKRK (89 aa)). An EF-hand 2 domain is found at 159 to 194 (LPLDVLGRVWDLSDIDKDGHLDRDEFAVAMHLVYRA). Residues Asp172, Asp174, Asp176, His178, and Glu183 each contribute to the Ca(2+) site. Residues Ser229, Ser244, Ser253, Ser255, and Ser259 each carry the phosphoserine modification. Residues 229 to 260 (SPPPKDSLRSTPSHGSVSSLNSTGSLSPKHSV) form a disordered region. Residues 241–255 (SHGSVSSLNSTGSLS) are compositionally biased toward low complexity. EF-hand domains are found at residues 272–307 (ADKM…SGLT) and 308–341 (QNLL…IQQK). Positions 273–363 (DKMRFDEIFL…PDMVPPSERG (91 aa)) constitute an EH 3 domain. A Phosphoserine modification is found at Ser360. Thr364 carries the phosphothreonine modification. Phosphoserine occurs at positions 369 and 375. The stretch at 384-551 (LDDISQEIAQ…RSKLSQLQES (168 aa)) forms a coiled coil. At Ser558 the chain carries Phosphoserine. Tyr562 bears the Phosphotyrosine mark. Phosphoserine is present on Ser610. Residues 611 to 860 (QELHPDPFQA…SSSGFADFTS (250 aa)) form a disordered region. Residues 622-636 (DPFKSDPFKGADPFK) show a composition bias toward basic and acidic residues. Polar residues predominate over residues 643–652 (DPFSEQQTAA). A phosphoserine mark is found at Ser664, Ser670, Ser695, Ser715, and Ser732. Residues 682–696 (NDPFTSDPFTKNPSL) show a composition bias toward polar residues. Residues 703-743 (FESSDPFSSSSISSKGSDPFGTLDPFGSSSFSSAEGFADFS) show a composition bias toward low complexity. A compositionally biased stretch (pro residues) spans 776–790 (ALPPKKPAPPRPKPP). Ser791 is modified (phosphoserine). Polar residues predominate over residues 791 to 802 (SGQSTPVSQLGS). Phosphothreonine is present on Thr795. Positions 840 to 853 (APSSSAKPPKTSSS) are enriched in low complexity. 2 consecutive UIM domains span residues 863-882 (NEEQ…EQER) and 889-907 (QEQE…DMPA).

As to quaternary structure, interacts with EPS15, AGFG1/HRB and AGFG2/HRBL. Associates with the clathrin-associated adapter protein complex 2 (AP-2). Interacts with FCHO1. Interacts with FCHO2. Interacts (via EH domains) with DAB2. Interacts with UBQLN1 (via ubiquitin-like domain). Interacts with CAVIN3 (via leucine-zipper domain). Interacts with REPS2. Phosphorylated on tyrosine residues by EGFR.

Its subcellular location is the cell membrane. It localises to the nucleus. The protein localises to the membrane. The protein resides in the coated pit. Functionally, seems to be a constitutive component of clathrin-coated pits that is required for receptor-mediated endocytosis. Involved in endocytosis of integrin beta-1 (ITGB1) and transferrin receptor (TFR); internalization of ITGB1 as DAB2-dependent cargo but not TFR seems to require association with DAB2. The sequence is that of Epidermal growth factor receptor substrate 15-like 1 (Eps15l1) from Mus musculus (Mouse).